Consider the following 989-residue polypeptide: Autotransporter adhesin/invasin TibA (989 aa).

Positions M1–A54 are cleaved as a signal peptide. Residues S74, S86, S93, S94, S97, S100, S112, S113, S116, S119, S124, S131, S132, and S135 are each glycosylated (O-alpha-linked (D-glycero-D-manno-heptose) serine). A run of 12 repeats spans residues T82–S100, T101–S119, S120–N138, T139–G157, T158–S176, A177–A195, T196–D214, T215–K233, T234–G251, T252–N270, T271–E289, and T290–K308. The tract at residues T82–K308 is 12 X 19 AA approximate repeats. Residues H110–N123 are compositionally biased toward polar residues. The tract at residues H110 to R146 is disordered. Positions S124–S135 are enriched in low complexity. Residues A136–R146 show a composition bias toward polar residues. Residues S151, S154, S162, S170, S176, S181, S188, S189, S200, S226, S227, S230, S238, S248, S263, S264, S275, S294, S305, S313, and S322 are each glycosylated (O-alpha-linked (D-glycero-D-manno-heptose) serine). Residues W623–T686 form a disordered region. Residues T629–N638 show a composition bias toward pro residues. 8 consecutive repeat copies span residues P639 to N643, P644 to N648, P649 to N653, P654 to N658, P659 to N663, P664 to K668, P669 to K673, and P674 to T678. Low complexity predominate over residues P639–G667. The segment at P639 to T678 is 8 X 5 AA repeats of P-[DG]-[AGT]-[DGA]-[NKT]. Residues N721–F989 form the Autotransporter domain.

In terms of assembly, homohexamer. In terms of processing, glycosylated by TibC. Glycosylation is required for adhesion to and invasion of host cells. Glycosylation is dispensable for bacterial autoaggregation and biofilm formation.

It localises to the cell outer membrane. Functionally, mediates both adhesion to and invasion of human intestine epithelial cells. Also mediates bacterial cell aggregation via intercellular TibA-TibA interaction. Enhances biofilm formation. This chain is Autotransporter adhesin/invasin TibA, found in Escherichia coli O78:H11 (strain H10407 / ETEC).